Reading from the N-terminus, the 418-residue chain is Serine/threonine transporter SstT (418 aa).

The next 8 helical transmembrane spans lie at 21–41, 49–69, 83–103, 142–162, 190–210, 217–237, 299–319, and 331–351; these read ILIG…AAIA, FVGA…IASI, ILFL…VVSF, ALLN…GIAL, FAPL…GFGA, LLVV…PLIV, MAGA…TLGI, and VVAA…LLLI.

Belongs to the dicarboxylate/amino acid:cation symporter (DAACS) (TC 2.A.23) family.

It localises to the cell inner membrane. It carries out the reaction L-serine(in) + Na(+)(in) = L-serine(out) + Na(+)(out). It catalyses the reaction L-threonine(in) + Na(+)(in) = L-threonine(out) + Na(+)(out). Functionally, involved in the import of serine and threonine into the cell, with the concomitant import of sodium (symport system). The sequence is that of Serine/threonine transporter SstT from Yersinia pestis bv. Antiqua (strain Antiqua).